Reading from the N-terminus, the 281-residue chain is 3-methyl-2-oxobutanoate hydroxymethyltransferase (281 aa).

Mg(2+) contacts are provided by Asp49 and Asp88. 3-methyl-2-oxobutanoate contacts are provided by residues 49–50, Asp88, and Lys118; that span reads DS. Glu120 provides a ligand contact to Mg(2+). Glu186 acts as the Proton acceptor in catalysis.

Belongs to the PanB family. Homodecamer; pentamer of dimers. The cofactor is Mg(2+).

It localises to the cytoplasm. The catalysed reaction is 3-methyl-2-oxobutanoate + (6R)-5,10-methylene-5,6,7,8-tetrahydrofolate + H2O = 2-dehydropantoate + (6S)-5,6,7,8-tetrahydrofolate. The protein operates within cofactor biosynthesis; (R)-pantothenate biosynthesis; (R)-pantoate from 3-methyl-2-oxobutanoate: step 1/2. Functionally, catalyzes the reversible reaction in which hydroxymethyl group from 5,10-methylenetetrahydrofolate is transferred onto alpha-ketoisovalerate to form ketopantoate. In Chelativorans sp. (strain BNC1), this protein is 3-methyl-2-oxobutanoate hydroxymethyltransferase.